The chain runs to 480 residues: Acyl-lipid (8-3)-desaturase (480 aa).

The tract at residues 1 to 30 is disordered; that stretch reads MAPHSADTAGLVPSDELRLRTSNSKGPEQE. One can recognise a Cytochrome b5 heme-binding domain in the interval 33 to 107; it reads LKKYTLEDVS…LAKYCIGELV (75 aa). Positions 68 and 90 each coordinate heme. 2 consecutive transmembrane segments (helical) span residues 151–171 and 173–193; these read IHPHMILKSLFILGGYFASYY and AFFWSSSVLVSLFFALWMGFF. The short motif at 203 to 207 is the Histidine box-1 element; it reads HDGNH. Residues 238 to 243 carry the Histidine box-2 motif; sequence HVVGHH. 3 helical membrane passes run 280–300, 322–342, and 348–368; these read IYLAVLYGTLALKSIFLDDFL, IFFQGKLLYAFYMFVLPSVYG, and TFLALYVASQLITGWMLAFLF. The Histidine box-3 signature appears at 419–423; it reads QIEHH.

This sequence belongs to the fatty acid desaturase type 1 family. Fe(2+) is required as a cofactor.

The protein resides in the membrane. It carries out the reaction an (8Z,11Z,14Z)-icosatrienoyl-containing glycerolipid + 2 Fe(II)-[cytochrome b5] + O2 + 2 H(+) = (5Z,8Z,11Z,14Z)-eicosatetraenoyl-containing glycerolipid + 2 Fe(III)-[cytochrome b5] + 2 H2O. The catalysed reaction is an (8Z,11Z,14Z,17Z)-eicosatetraenoyl-containing glycerolipid + 2 Fe(II)-[cytochrome b5] + O2 + 2 H(+) = a (5Z,8Z,11Z,14Z,17Z)-eicosapentaenoyl-containing glycerolipid + 2 Fe(III)-[cytochrome b5] + 2 H2O. Its function is as follows. Fatty acid desaturase that introduces a cis double bond at the 5-position in 20-carbon polyunsaturated fatty acids incorporated in a glycerolipid that contain a Delta(8) double bond. The polypeptide is Acyl-lipid (8-3)-desaturase (Physcomitrium patens (Spreading-leaved earth moss)).